A 311-amino-acid polypeptide reads, in one-letter code: 1,4-dihydroxy-2-naphthoate octaprenyltransferase (311 aa).

9 helical membrane passes run 31-51, 53-73, 104-126, 131-153, 157-177, 182-202, 220-240, 242-262, and 290-310; these read LTASFVPVLLGTVLAMFYVKV, LLLFLAMLFSCLWIQIATNLF, TILQLALASYGIAILLGVYICAS, LALIGLVGMAIGYLYTGGPLPIA, FGELFSGICMGSVFVLISFFI, INMQSILISIPIAILVGAINL, LAILMGHKGAVTLLAASFAVA, IWVVGLVITGAASPWLFVVFL, and TAQTNTFFGFLLSIGLLISYF.

The protein belongs to the MenA family. Type 1 subfamily.

It is found in the cell membrane. It catalyses the reaction an all-trans-polyprenyl diphosphate + 1,4-dihydroxy-2-naphthoate + H(+) = a 2-demethylmenaquinol + CO2 + diphosphate. It functions in the pathway quinol/quinone metabolism; menaquinone biosynthesis; menaquinol from 1,4-dihydroxy-2-naphthoate: step 1/2. Its function is as follows. Conversion of 1,4-dihydroxy-2-naphthoate (DHNA) to demethylmenaquinone (DMK). The protein is 1,4-dihydroxy-2-naphthoate octaprenyltransferase of Bacillus subtilis (strain 168).